We begin with the raw amino-acid sequence, 284 residues long: Pantothenate synthetase (284 aa).

An ATP-binding site is contributed by 30–37 (MGNLHEGH). Residue His37 is the Proton donor of the active site. Gln61 contributes to the (R)-pantoate binding site. Beta-alanine is bound at residue Gln61. 149–152 (GEKD) provides a ligand contact to ATP. Gln155 contacts (R)-pantoate. Residues Val178 and 186-189 (LSSR) contribute to the ATP site.

Belongs to the pantothenate synthetase family. As to quaternary structure, homodimer.

The protein localises to the cytoplasm. It catalyses the reaction (R)-pantoate + beta-alanine + ATP = (R)-pantothenate + AMP + diphosphate + H(+). It functions in the pathway cofactor biosynthesis; (R)-pantothenate biosynthesis; (R)-pantothenate from (R)-pantoate and beta-alanine: step 1/1. Functionally, catalyzes the condensation of pantoate with beta-alanine in an ATP-dependent reaction via a pantoyl-adenylate intermediate. The chain is Pantothenate synthetase from Yersinia pseudotuberculosis serotype O:1b (strain IP 31758).